We begin with the raw amino-acid sequence, 66 residues long: Large ribosomal subunit protein uL29 (66 aa).

Belongs to the universal ribosomal protein uL29 family.

This chain is Large ribosomal subunit protein uL29, found in Methylibium petroleiphilum (strain ATCC BAA-1232 / LMG 22953 / PM1).